The primary structure comprises 544 residues: Chaperonin GroEL (544 aa).

ATP contacts are provided by residues 29–32 (TLGP), 86–90 (DGTTT), glycine 413, 476–478 (NAA), and aspartate 492. A disordered region spans residues 522–544 (PDPNANNNAAAGANPAAGMGGMM). Residues 524–538 (PNANNNAAAGANPAA) are compositionally biased toward low complexity.

Belongs to the chaperonin (HSP60) family. Forms a cylinder of 14 subunits composed of two heptameric rings stacked back-to-back. Interacts with the co-chaperonin GroES.

It is found in the cytoplasm. The enzyme catalyses ATP + H2O + a folded polypeptide = ADP + phosphate + an unfolded polypeptide.. Functionally, together with its co-chaperonin GroES, plays an essential role in assisting protein folding. The GroEL-GroES system forms a nano-cage that allows encapsulation of the non-native substrate proteins and provides a physical environment optimized to promote and accelerate protein folding. The polypeptide is Chaperonin GroEL (Lacticaseibacillus casei (strain BL23) (Lactobacillus casei)).